Consider the following 68-residue polypeptide: Large ribosomal subunit protein uL29 (68 aa).

This sequence belongs to the universal ribosomal protein uL29 family.

This Parvibaculum lavamentivorans (strain DS-1 / DSM 13023 / NCIMB 13966) protein is Large ribosomal subunit protein uL29.